The chain runs to 335 residues: Holliday junction branch migration complex subunit RuvB (335 aa).

Residues 4 to 184 (ADRLIQPTAL…FGIVQRLEFY (181 aa)) form a large ATPase domain (RuvB-L) region. ATP contacts are provided by residues Ile-23, Arg-24, Gly-65, Lys-68, Thr-69, Thr-70, 131–133 (EDY), Arg-174, Tyr-184, and Arg-221. Thr-69 lines the Mg(2+) pocket. The small ATPAse domain (RuvB-S) stretch occupies residues 185–255 (NIKDLTQIVK…VASAALDMLD (71 aa)). Residues 258–335 (KEGFDYMDRK…LHFGYDYEPN (78 aa)) are head domain (RuvB-H). 3 residues coordinate DNA: Arg-294, Arg-313, and Arg-318.

It belongs to the RuvB family. Homohexamer. Forms an RuvA(8)-RuvB(12)-Holliday junction (HJ) complex. HJ DNA is sandwiched between 2 RuvA tetramers; dsDNA enters through RuvA and exits via RuvB. An RuvB hexamer assembles on each DNA strand where it exits the tetramer. Each RuvB hexamer is contacted by two RuvA subunits (via domain III) on 2 adjacent RuvB subunits; this complex drives branch migration. In the full resolvosome a probable DNA-RuvA(4)-RuvB(12)-RuvC(2) complex forms which resolves the HJ.

The protein resides in the cytoplasm. It carries out the reaction ATP + H2O = ADP + phosphate + H(+). In terms of biological role, the RuvA-RuvB-RuvC complex processes Holliday junction (HJ) DNA during genetic recombination and DNA repair, while the RuvA-RuvB complex plays an important role in the rescue of blocked DNA replication forks via replication fork reversal (RFR). RuvA specifically binds to HJ cruciform DNA, conferring on it an open structure. The RuvB hexamer acts as an ATP-dependent pump, pulling dsDNA into and through the RuvAB complex. RuvB forms 2 homohexamers on either side of HJ DNA bound by 1 or 2 RuvA tetramers; 4 subunits per hexamer contact DNA at a time. Coordinated motions by a converter formed by DNA-disengaged RuvB subunits stimulates ATP hydrolysis and nucleotide exchange. Immobilization of the converter enables RuvB to convert the ATP-contained energy into a lever motion, pulling 2 nucleotides of DNA out of the RuvA tetramer per ATP hydrolyzed, thus driving DNA branch migration. The RuvB motors rotate together with the DNA substrate, which together with the progressing nucleotide cycle form the mechanistic basis for DNA recombination by continuous HJ branch migration. Branch migration allows RuvC to scan DNA until it finds its consensus sequence, where it cleaves and resolves cruciform DNA. The polypeptide is Holliday junction branch migration complex subunit RuvB (Pseudoalteromonas atlantica (strain T6c / ATCC BAA-1087)).